The following is a 631-amino-acid chain: Phosphomethylpyrimidine synthase (631 aa).

Substrate contacts are provided by residues Asn239, Met268, Tyr297, His333, 353–355 (SRG), 394–397 (DGLR), and Glu433. His437 contributes to the Zn(2+) binding site. Tyr460 is a substrate binding site. His501 is a Zn(2+) binding site. 3 residues coordinate [4Fe-4S] cluster: Cys581, Cys584, and Cys589.

The protein belongs to the ThiC family. As to quaternary structure, homodimer. It depends on [4Fe-4S] cluster as a cofactor.

The enzyme catalyses 5-amino-1-(5-phospho-beta-D-ribosyl)imidazole + S-adenosyl-L-methionine = 4-amino-2-methyl-5-(phosphooxymethyl)pyrimidine + CO + 5'-deoxyadenosine + formate + L-methionine + 3 H(+). It functions in the pathway cofactor biosynthesis; thiamine diphosphate biosynthesis. Its function is as follows. Catalyzes the synthesis of the hydroxymethylpyrimidine phosphate (HMP-P) moiety of thiamine from aminoimidazole ribotide (AIR) in a radical S-adenosyl-L-methionine (SAM)-dependent reaction. This Salmonella enteritidis PT4 (strain P125109) protein is Phosphomethylpyrimidine synthase.